The primary structure comprises 780 residues: MDSKEEAIQLITEEKHFSDDALAYFKTCIGGRDVGVNYHVISVFGSQSSGKSTLLNILFNTSFDTMDAQIKRQQTTKGIWVAHSNELLSNVDVNPEDKSDLFILDVEGSDGLERGEDQDFERKAALFAISVSEVLIVNMWEQQIGLYQGNNMALLKTVFEVNLSLFGKNKNGHKVLLLFVIRDHVGVTPISSLRDTITTELINLWETLSKPAECENKKLSDFFELQFVGLSHKLLQEERFVQDVKSLGDHFIMKDNEDYYFKPEYHHNLPLDGWTLYAKNCWELIEENRDLDLPTQQILVARFKTEEILNDSLEVLKSKYDSNVDPVIKDKLKLIQELSVLKTECLDMYDQHASKYVSAVYLEKRDELEAKIYLKFLETITLFIDSVSQDIFLQLVEDVNSESSKEPIFSKRLSNSTEVAKSKFEDIIEEFAAAKILSEEVKEEVVKRFENDLKETSDKLRVTALQKLITRSSKIINARIKDVVPQLLSNPDVDVWDRIMDKFHSIFSSTLIKYKLDDDTYDFQFGGEDEENNSTYKSIRVAAWKSLNDTIHDYLKEDTICNILRDRFELKFRYDDEDSPILWKNEEEVDLAFRVAKEYAFKIFDVLALIKTSDNVEVVPDINFHDSDEMYEDDLGIYHSAKFSHILNEVQKEKIQIQVRRQINVTVLDAKRSMIKTTTHIPLWIYAIIVVLGWNEFMMVIRNPLFVTLTILILVSFYFINKFDLWGPVKSVAQTAAGETIGTIKTKLRDFVLEEHEKTPKIQSEKSNSDSEKVVENEKS.

Over 1–680 (MDSKEEAIQL…KRSMIKTTTH (680 aa)) the chain is Cytoplasmic. The region spanning 35–265 (GVNYHVISVF…NEDYYFKPEY (231 aa)) is the GB1/RHD3-type G domain. 45–52 (GSQSSGKS) serves as a coordination point for GTP. Residues 440-463 (EVKEEVVKRFENDLKETSDKLRVT) adopt a coiled-coil conformation. A helical membrane pass occupies residues 681–701 (IPLWIYAIIVVLGWNEFMMVI). The Lumenal segment spans residues 702-704 (RNP). A helical transmembrane segment spans residues 705-725 (LFVTLTILILVSFYFINKFDL). Residues 726-780 (WGPVKSVAQTAAGETIGTIKTKLRDFVLEEHEKTPKIQSEKSNSDSEKVVENEKS) lie on the Cytoplasmic side of the membrane. Positions 756-780 (HEKTPKIQSEKSNSDSEKVVENEKS) are disordered.

This sequence belongs to the TRAFAC class dynamin-like GTPase superfamily. GB1/RHD3 GTPase family. RHD3 subfamily.

The protein resides in the endoplasmic reticulum membrane. In terms of biological role, cooperates with the reticulon proteins and tubule-shaping DP1 family proteins to generate and maintain the structure of the tubular endoplasmic reticulum network. Has GTPase activity, which is required for its function in ER organization. This chain is Protein SEY1, found in Vanderwaltozyma polyspora (strain ATCC 22028 / DSM 70294 / BCRC 21397 / CBS 2163 / NBRC 10782 / NRRL Y-8283 / UCD 57-17) (Kluyveromyces polysporus).